The primary structure comprises 166 residues: Minor capsid protein VP2 (166 aa).

The disordered stretch occupies residues 138–166 (PAPSGFVNPNYQPSPPRLKLGPRPPSTNV). Residues 149-166 (QPSPPRLKLGPRPPSTNV) show a composition bias toward pro residues.

The protein belongs to the vesivirus VP2 protein family. In terms of assembly, homooligomer. The portal-like structure consists in 12 copies of VP2. Interacts with capsid protein VP1.

The protein resides in the virion. It localises to the host cytoplasm. Its function is as follows. Minor structural protein that forms a portal-like structure at a unique three-fold axis of symmetry, following binding to the host receptor. The channel formed by VP2 may allow the delivery of the viral genome through the host endosomal membrane. In Homo sapiens (Human), this protein is Minor capsid protein VP2.